We begin with the raw amino-acid sequence, 25 residues long: Arginine attenuator peptide (25 aa).

This sequence belongs to the arginine attenuator peptide family.

Functionally, arginine attenuator peptide (AAP) that has a regulatory role in the production of arginine-specific carbamoyl phosphate synthetase. Encoded by an upstream open reading frame (uORF) within the 5'-leader region of arginine-specific carbamoyl phosphate synthetase small chain (CPA1) mRNA, it attenuates the translation of the downstream CPA1 ORF. In the presence of high concentrations of arginine, ribosomes translating the uORF encoding AAP stall at the termination codon, resulting in reduced translation from the downstream CPA1 initiation codon. The polypeptide is Arginine attenuator peptide (Saccharomyces cerevisiae (strain ATCC 204508 / S288c) (Baker's yeast)).